A 475-amino-acid polypeptide reads, in one-letter code: MTAPLPPIAAIATAPGRGGIGVVRVSGPDVRPVMHAICGQALKPRHATYLPFLDGHGKVIDHGLALYFPGPNSYTGEEVLELQGHGGPVVMQMLLTRCLQAGHGIGLRLAEPGEFTRRAFLNDKLDLAQAEAVADLIEASTEAAARSAARSMEGEFSHAIHTLVEKVIHLRMLVEATLDFPEEEIDFLEASDARGQLATIRNDLGNVLAQARQGALLREGLSVVLAGQPNVGKSSLLNALAGAELAIVTPIAGTTRDRVKETIQIEGIPLHIIDTAGLRDEATDEVERIGIERTWDAIRRADIVLHLVDATDYLRHGLSEIDDAIDDRLSGQLPPGAPIVRVVNKIDVAPTVGGMMFSGNRPHVVAANGPNPTEIWISARTGSGIELLRKELLRLVGWQSGNEGTFLARERHLTALRQAQSHLDVAAEQSERQAQALDLFAEELRLAQEHLNSITGEFTSDDLLGTIFTRFCIGK.

(6S)-5-formyl-5,6,7,8-tetrahydrofolate contacts are provided by arginine 24, glutamate 81, and lysine 124. The TrmE-type G domain maps to 220-397 (GLSVVLAGQP…LRKELLRLVG (178 aa)). A K(+)-binding site is contributed by asparagine 230. Residues 230-235 (NVGKSS), 249-255 (TPIAGTT), 274-277 (DTAG), and 378-380 (SAR) each bind GTP. Serine 234 contacts Mg(2+). K(+) is bound by residues threonine 249, isoleucine 251, and threonine 254. Threonine 255 provides a ligand contact to Mg(2+). Lysine 475 is a (6S)-5-formyl-5,6,7,8-tetrahydrofolate binding site.

This sequence belongs to the TRAFAC class TrmE-Era-EngA-EngB-Septin-like GTPase superfamily. TrmE GTPase family. In terms of assembly, homodimer. Heterotetramer of two MnmE and two MnmG subunits. The cofactor is K(+).

It localises to the cytoplasm. Functionally, exhibits a very high intrinsic GTPase hydrolysis rate. Involved in the addition of a carboxymethylaminomethyl (cmnm) group at the wobble position (U34) of certain tRNAs, forming tRNA-cmnm(5)s(2)U34. The polypeptide is tRNA modification GTPase MnmE (Cupriavidus pinatubonensis (strain JMP 134 / LMG 1197) (Cupriavidus necator (strain JMP 134))).